A 430-amino-acid polypeptide reads, in one-letter code: Glutamate-1-semialdehyde 2,1-aminomutase (430 aa).

Lysine 269 is subject to N6-(pyridoxal phosphate)lysine.

The protein belongs to the class-III pyridoxal-phosphate-dependent aminotransferase family. HemL subfamily. In terms of assembly, homodimer. It depends on pyridoxal 5'-phosphate as a cofactor.

The protein resides in the cytoplasm. The catalysed reaction is (S)-4-amino-5-oxopentanoate = 5-aminolevulinate. It participates in porphyrin-containing compound metabolism; protoporphyrin-IX biosynthesis; 5-aminolevulinate from L-glutamyl-tRNA(Glu): step 2/2. The protein is Glutamate-1-semialdehyde 2,1-aminomutase of Desulfitobacterium hafniense (strain Y51).